The chain runs to 265 residues: Sulfur carrier protein FdhD (265 aa).

Cys-107 functions as the Cysteine persulfide intermediate in the catalytic mechanism.

Belongs to the FdhD family.

The protein localises to the cytoplasm. Functionally, required for formate dehydrogenase (FDH) activity. Acts as a sulfur carrier protein that transfers sulfur from IscS to the molybdenum cofactor prior to its insertion into FDH. This chain is Sulfur carrier protein FdhD, found in Staphylococcus aureus (strain bovine RF122 / ET3-1).